A 460-amino-acid polypeptide reads, in one-letter code: Kynurenine 3-monooxygenase (460 aa).

FAD is bound by residues V13, 32–34 (DFR), and A53. Positions 83 and 97 each coordinate L-kynurenine. Residues R109, L133, Y195, D314, and 325-328 (QGMN) each bind FAD. 2 residues coordinate L-kynurenine: N373 and Y408.

It belongs to the aromatic-ring hydroxylase family. KMO subfamily. It depends on FAD as a cofactor.

Its subcellular location is the mitochondrion outer membrane. The enzyme catalyses L-kynurenine + NADPH + O2 + H(+) = 3-hydroxy-L-kynurenine + NADP(+) + H2O. The protein operates within cofactor biosynthesis; NAD(+) biosynthesis; quinolinate from L-kynurenine: step 1/3. Catalyzes the hydroxylation of L-kynurenine (L-Kyn) to form 3-hydroxy-L-kynurenine (L-3OHKyn). Required for synthesis of quinolinic acid. This chain is Kynurenine 3-monooxygenase, found in Saccharomyces cerevisiae (strain ATCC 204508 / S288c) (Baker's yeast).